A 224-amino-acid chain; its full sequence is Putative O-methyltransferase MMAR_4217 (224 aa).

Polar residues predominate over residues 1–11 (MHGTDSSSDTP). Residues 1 to 20 (MHGTDSSSDTPGQPAPSRAE) form a disordered region. S-adenosyl-L-methionine-binding positions include V51, E73, 75–76 (GT), S81, D99, and I100. D147 lines the substrate pocket. D149 is a binding site for S-adenosyl-L-methionine.

The protein belongs to the class I-like SAM-binding methyltransferase superfamily. Cation-dependent O-methyltransferase family.

In Mycobacterium marinum (strain ATCC BAA-535 / M), this protein is Putative O-methyltransferase MMAR_4217.